The sequence spans 404 residues: Dihydroorotase (404 aa).

Residues His-57 and His-59 each contribute to the Zn(2+) site. Substrate is bound by residues 59–61 and Asn-91; that span reads HLR. Residues Lys-135, His-164, His-204, and Asp-272 each contribute to the Zn(2+) site. Position 135 is an N6-carboxylysine (Lys-135). Asp-272 is an active-site residue. Residues His-276 and 286 to 287 contribute to the substrate site; that span reads AG.

Belongs to the metallo-dependent hydrolases superfamily. DHOase family. Class I DHOase subfamily. Zn(2+) serves as cofactor.

It catalyses the reaction (S)-dihydroorotate + H2O = N-carbamoyl-L-aspartate + H(+). It participates in pyrimidine metabolism; UMP biosynthesis via de novo pathway; (S)-dihydroorotate from bicarbonate: step 3/3. Its function is as follows. Catalyzes the reversible cyclization of carbamoyl aspartate to dihydroorotate. The chain is Dihydroorotase from Pyrococcus abyssi (strain GE5 / Orsay).